A 299-amino-acid chain; its full sequence is MKQFLITGGTGMVGSQLVNKLKNRDVHITILTRSDKQSDDPKISYVNWSKDGWMSQVPDIDVVVNLAGATLNKRWTPSYKQLIMTSRIQSTQSLVDLFSQREHKPEVLFNASAMGYYPPSLYHTYTEKYQTHPFDFLSDVVYQWERFAKRFESFGTRVVLGRFSMILSNDGGALQTMKLPYKFFVGGKLGSGFQWYSWIHINDLVRAILFTIDNPNAKGPFNMAAPIAERQNLFGYTLARVMHRPHETWVPSFLMRLALGEMSTVVLDTQKVLPNKLDALGFTFNYSNLKIAFEDLIDA.

It belongs to the NAD(P)-dependent epimerase/dehydratase family. SDR39U1 subfamily.

This is Epimerase family protein SH2119 from Staphylococcus haemolyticus (strain JCSC1435).